Reading from the N-terminus, the 317-residue chain is Tenomodulin (317 aa).

At 1–30 (MAKNPPENCEGCHILNAEALKSKKICKSLK) the chain is on the cytoplasmic side. Residues 31–50 (ICGLVFGILALTLIVLFWGS) form a helical; Signal-anchor for type II membrane protein membrane-spanning segment. Over 51–317 (KHFWPEVSKK…WWVARMLGRV (267 aa)) the chain is Extracellular. Positions 93–186 (GNGTDETLEV…ICDNVTMYWI (94 aa)) constitute a BRICHOS domain. Asn-94 carries an N-linked (GlcNAc...) asparagine glycan. A disulfide bond links Cys-120 and Cys-178. An N-linked (GlcNAc...) asparagine glycan is attached at Asn-180. At Ser-239 the chain carries Phosphoserine.

It belongs to the chondromodulin-1 family. Widely expressed with highest expression in tendons and ligaments, in the diaphragm, eye and skeletal muscle. Expressed in neuronal cells of all brain regions. Very low expression, if any, in glial cells.

It localises to the membrane. Its subcellular location is the nucleus envelope. Functionally, may be an angiogenesis inhibitor. This chain is Tenomodulin (Tnmd), found in Mus musculus (Mouse).